Here is a 166-residue protein sequence, read N- to C-terminus: MSKPLCSTGLRWLWLVVVVLIIDLGSKYLILQNFALGDTVGLFPSLNLHYARNYGAAFSFLADSGSWQRWFFAGIAIGICVILLVMMYRSKATQKLNNIAYALIIGGALGNLFDRLWHGFVVDMIDFYVGDWHFATFNLADTAICIGAALIVLEGFLPKPTAKEQA.

Transmembrane regions (helical) follow at residues 12–32, 70–90, and 102–122; these read WLWL…LILQ, WFFA…MYRS, and ALII…GFVV. Catalysis depends on residues Asp-123 and Asp-141. The helical transmembrane segment at 137–157 threads the bilayer; sequence FNLADTAICIGAALIVLEGFL.

The protein belongs to the peptidase A8 family.

It localises to the cell inner membrane. The enzyme catalyses Release of signal peptides from bacterial membrane prolipoproteins. Hydrolyzes -Xaa-Yaa-Zaa-|-(S,diacylglyceryl)Cys-, in which Xaa is hydrophobic (preferably Leu), and Yaa (Ala or Ser) and Zaa (Gly or Ala) have small, neutral side chains.. It functions in the pathway protein modification; lipoprotein biosynthesis (signal peptide cleavage). In terms of biological role, this protein specifically catalyzes the removal of signal peptides from prolipoproteins. This chain is Lipoprotein signal peptidase, found in Salmonella typhi.